Consider the following 322-residue polypeptide: Cysteine protease YopT (322 aa).

Residues Cys-139, His-258, and Asp-274 contribute to the active site.

Belongs to the peptidase C58 family. As to quaternary structure, interacts with human ARHA.

The protein resides in the secreted. Functionally, cysteine protease, which is translocated into infected cells and plays a central role in pathogenesis by cleaving the C-terminus end of the human small GTPase RhoA/ARHA, a regulator of cytoskeleton. Once cleaved, ARHA loses its lipid modification, and is released from the cell membrane, leading to the subsequent disruption of actin cytoskeleton of the host cell. In Yersinia pseudotuberculosis serotype I (strain IP32953), this protein is Cysteine protease YopT (yopT).